The sequence spans 172 residues: RNA silencing suppressor p19 (172 aa).

2 disordered regions span residues 1–38 (MEGA…ESPG) and 152–172 (VEGN…KESE). Basic and acidic residues-rich tracts occupy residues 9-20 (DAREQANSERWD) and 159-172 (GRPE…KESE).

This sequence belongs to the tombusvirus protein p19 family. As to quaternary structure, homodimer.

Its function is as follows. Viral suppressor of RNA silencing which binds specifically to silencing RNAs (siRNAs). Acts as a molecular caliper to specifically select siRNAs based on the length of the duplex region of the RNA. The polypeptide is RNA silencing suppressor p19 (Havel river virus (HaRV)).